Reading from the N-terminus, the 574-residue chain is MRETPEREEEPGTEAPCAASCHAQRILQTLNAYRRSGTLTDVVLRAGGRDFPCHRAALSAASAHFRGLFAAGRPERAAAVVPVGPETPGTAAALAVVLDYVYGAGVRLRAEDEAAAVLALAERLGVAGLREACARFLEGRLRAANSLALRRVAAAFSLASLAERCGRVLRQAFVEVTRHADFLELAPDEVAALLADPALRVAREEAVFEAAMRWVRHDAPARRGQLRRLLEHVRLPLLAPAYFLEKVEADELLQACGDCRPLLLEARACFILGREAGALRARPRRFMDLAEVIVVIGGCDRKGLLKLPFADAYHPESQRWTPLPSLPGYTRSEFASCALRNDIYVSGGHINSRDVWMFSSHLNTWIKVASMHKGRWRHKMVALQGQLFAVGGFDGLRRLRSVERYDPFSNTWAAIAPLPEAVSSAAVAPCAGQLYVIGGAGQDGVNTDKVQCFDPKEDQWSLRSPAPFLQRCLEAVSLEDTIYVVGGLMSKIFTYDPGSDVWREAADLPSPVESCGVTVCDGKVHILGGRDEHGESTSSVFTFDPGTGQVEAQPSLQRCTSSHGCVTIVQSLSR.

The BTB domain maps to 40–110; that stretch reads TDVVLRAGGR…VYGAGVRLRA (71 aa). A BACK domain is found at 146-248; it reads SLALRRVAAA…APAYFLEKVE (103 aa). Kelch repeat units follow at residues 292–341, 343–385, 386–432, 434–480, 481–522, and 524–570; these read VIVV…ALRN, IYVS…ALQG, QLFA…PCAG, LYVI…SLED, TIYV…VCDG, and VHIL…TIVQ.

The protein is Kelch-like protein 35 (Klhl35) of Mus musculus (Mouse).